A 324-amino-acid polypeptide reads, in one-letter code: MKPSVILYKALPDDLLQRLQEHFTVHQVANLSPQTVEQNAAIFAEAEGLLGSNENVDAALLEKMPKLRATSTISVGYDNFDVDALTARKILLMHTPTVLTETVADTLMALVLSTARRVVEVAERVKAGEWTASIGPDWYGTDVHHKTLGIVGMGRIGMALAQRAHFGFNMPILYNARRHHKEAEERFNARYCDLDTLLQESDFVCLILPLTDETYHLFGAEQFGKMKSSAIFINAGRGPVVDENALIAALQKGEIHAAGLDVFEQEPLSVDSPLLSMANVVAVPHIGSATHETRYGMAACAVDNLIDALQGKVEKNCVNPHVAD.

Active-site residues include arginine 237 and glutamate 266. The Proton donor role is filled by histidine 285.

It belongs to the D-isomer specific 2-hydroxyacid dehydrogenase family. GhrB subfamily. Homodimer.

It localises to the cytoplasm. The catalysed reaction is glycolate + NADP(+) = glyoxylate + NADPH + H(+). The enzyme catalyses (R)-glycerate + NAD(+) = 3-hydroxypyruvate + NADH + H(+). It carries out the reaction (R)-glycerate + NADP(+) = 3-hydroxypyruvate + NADPH + H(+). In terms of biological role, catalyzes the NADPH-dependent reduction of glyoxylate and hydroxypyruvate into glycolate and glycerate, respectively. The sequence is that of Glyoxylate/hydroxypyruvate reductase B from Escherichia coli O6:K15:H31 (strain 536 / UPEC).